Here is a 310-residue protein sequence, read N- to C-terminus: MAATGANAEKAESHNDCPVRLLNPNIAKMKEDILYHFNLTTSRHNFPALFGDVKFVCVGGSPSRMKAFIRCVGAELGLDCPGRDYPNICAGTDRYAMYKVGPVLSVSHGMGIPSISIMLHELIKLLYYARCSNVTIIRIGTSGGIGLEPGTVVITEQAVDTCFKAEFEQIVLGKRVIRKTDLNKKLVQELLLCSAELSEFTTVVGNTMCTLDFYEGQGRLDGALCSYTEKDKQAYLEAAYAAGVRNIEMESSVFAAMCSACGLQAAVVCVTLLNRLEGDQISSPRNVLSEYQQRPQRLVSYFIKKKLSKA.

Residues G60, R94, and 138–141 (RIGT) each bind phosphate. Uridine contacts are provided by residues 142 to 143 (SG) and 217 to 219 (QGR).

The protein belongs to the PNP/UDP phosphorylase family. Homodimer.

It catalyses the reaction uridine + phosphate = alpha-D-ribose 1-phosphate + uracil. It carries out the reaction 2'-deoxyuridine + phosphate = 2-deoxy-alpha-D-ribose 1-phosphate + uracil. Its pathway is pyrimidine metabolism; UMP biosynthesis via salvage pathway; uracil from uridine (phosphorylase route): step 1/1. Functionally, catalyzes the reversible phosphorylytic cleavage of uridine to uracil and ribose-1-phosphate which can then be utilized as carbon and energy sources or in the rescue of pyrimidine bases for nucleotide synthesis. Shows broad substrate specificity and can also accept deoxyuridine and other analogous compounds. In Homo sapiens (Human), this protein is Uridine phosphorylase 1.